A 397-amino-acid chain; its full sequence is tRNA pseudouridine synthase D (397 aa).

D76 acts as the Nucleophile in catalysis. A TRUD domain is found at 151–361 (GVPNFFGEQR…MEGERRPLRV (211 aa)).

It belongs to the pseudouridine synthase TruD family.

The catalysed reaction is uridine(13) in tRNA = pseudouridine(13) in tRNA. Its function is as follows. Responsible for synthesis of pseudouridine from uracil-13 in transfer RNAs. In Geotalea daltonii (strain DSM 22248 / JCM 15807 / FRC-32) (Geobacter daltonii), this protein is tRNA pseudouridine synthase D.